Reading from the N-terminus, the 349-residue chain is Mediator of RNA polymerase II transcription subunit 19 (349 aa).

Over residues 1 to 28 (MSFHPQTPQSPSHFSPSSSDQSTSMSGS) the composition is skewed to low complexity. Disordered stretches follow at residues 1 to 81 (MSFH…EQKK) and 238 to 349 (AHLN…VSGI). The span at 29–53 (IVSTTTTLPTPAHSVNGSSLANDMS) shows a compositional bias: polar residues. Residues 70-81 (TSDDVGDREQKK) show a composition bias toward basic and acidic residues. Residues 330–341 (QSYAQARQQSSY) are compositionally biased toward low complexity.

This sequence belongs to the Mediator complex subunit 19 family. In terms of assembly, component of the Mediator complex.

It localises to the nucleus. Its function is as follows. Component of the Mediator complex, a coactivator involved in the regulated transcription of nearly all RNA polymerase II-dependent genes. Mediator functions as a bridge to convey information from gene-specific regulatory proteins to the basal RNA polymerase II transcription machinery. Mediator is recruited to promoters by direct interactions with regulatory proteins and serves as a scaffold for the assembly of a functional preinitiation complex with RNA polymerase II and the general transcription factors. The sequence is that of Mediator of RNA polymerase II transcription subunit 19 (rox3) from Neurospora crassa (strain ATCC 24698 / 74-OR23-1A / CBS 708.71 / DSM 1257 / FGSC 987).